The following is a 592-amino-acid chain: Probable 6-phosphofructo-2-kinase C222.13c (592 aa).

The interval 1-80 (MSNTGSARTE…PANDVEKMEV (80 aa)) is disordered. The segment covering 57 to 66 (SIFKREELTP) has biased composition (basic and acidic residues). 150–157 (GIPATGKS) contacts ATP. Catalysis depends on residues aspartate 235 and cysteine 266. Arginine 300 is a beta-D-fructose 6-phosphate binding site. Histidine 527 acts as the Proton donor in catalysis.

The protein resides in the cytoplasm. It localises to the nucleus. The catalysed reaction is beta-D-fructose 6-phosphate + ATP = beta-D-fructose 2,6-bisphosphate + ADP + H(+). Synthesis of fructose 2,6-bisphosphate. This Schizosaccharomyces pombe (strain 972 / ATCC 24843) (Fission yeast) protein is Probable 6-phosphofructo-2-kinase C222.13c.